Here is a 1518-residue protein sequence, read N- to C-terminus: WD repeat-containing protein 62 (1518 aa).

The residue at position 2 (alanine 2) is an N-acetylalanine. Serine 33 is modified (phosphoserine). A Phosphothreonine modification is found at threonine 46. Phosphoserine is present on serine 49. A Phosphothreonine modification is found at threonine 50. Serine 52 bears the Phosphoserine mark. WD repeat units follow at residues threonine 109–glutamate 150, glycine 153–serine 194, lysine 196–valine 234, isoleucine 291–asparagine 330, alanine 357–lysine 396, phenylalanine 402–tryptophan 450, aspartate 490–lysine 529, alanine 532–glutamine 574, aspartate 578–histidine 618, alanine 626–cysteine 665, glycine 671–glycine 713, and histidine 714–methionine 752. Phosphoserine is present on serine 501. The segment covering arginine 762–lysine 772 has biased composition (basic and acidic residues). Disordered regions lie at residues arginine 762–proline 824 and alanine 908–serine 935. The span at threonine 781–histidine 790 shows a compositional bias: polar residues. A compositionally biased stretch (acidic residues) spans glutamine 797–glutamate 809. The stretch at glutamate 803–valine 846 is one WD 13 repeat. The span at glutamate 810–proline 824 shows a compositional bias: basic and acidic residues. Low complexity predominate over residues alanine 908–alanine 920. The residue at position 944 (serine 944) is a Phosphoserine. The disordered stretch occupies residues glutamate 962 to glutamate 1055. Polar residues-rich tracts occupy residues glutamine 971 to aspartate 981 and valine 1045 to proline 1054. The residue at position 1053 (threonine 1053) is a Phosphothreonine. Phosphoserine occurs at positions 1070, 1093, 1101, 1123, 1144, 1228, 1248, and 1249. Residues glycine 1132 to leucine 1173 form a WD 14 repeat. Residues serine 1255 to arginine 1293 form a WD 15 repeat. At threonine 1268 the chain carries Phosphothreonine. The segment at phenylalanine 1339–proline 1377 is disordered.

Can form homodimers (via C-terminus). Interacts (via C-terminus) with MAPKBP1 (via C-terminus). Interacts with CDK5RAP2, CEP152, CEP63 and KIAA0753. CEP63, CDK5RAP2, CEP152, WDR62 are proposed to form a stepwise assembled complex at the centrosome forming a ring near parental centrioles. Present in fetal brain, enriched within the ventricular and subventricular zone (at protein level). In the embryonic brain it is expressed in mitotic neural precursor cells.

It localises to the nucleus. Its subcellular location is the cytoplasm. The protein resides in the cytoskeleton. It is found in the spindle pole. The protein localises to the microtubule organizing center. It localises to the centrosome. Its subcellular location is the centriole. In terms of biological role, required for cerebral cortical development. Plays a role in neuronal proliferation and migration. Plays a role in mother-centriole-dependent centriole duplication; the function also seems to involve CEP152, CDK5RAP2 and CEP63 through a stepwise assembled complex at the centrosome that recruits CDK2 required for centriole duplication. This Homo sapiens (Human) protein is WD repeat-containing protein 62 (WDR62).